A 431-amino-acid chain; its full sequence is RNA-binding motif, single-stranded-interacting protein 3 (431 aa).

Residues 28 to 53 (YAPAPHPMAPPSPSTNSSSNSSGEQL) are disordered. The segment covering 31 to 40 (APHPMAPPSP) has biased composition (pro residues). 2 RRM domains span residues 56–129 (TNLY…MAKQ) and 135–220 (TNLY…FADG). Disordered stretches follow at residues 220-242 (GGQKKRQGQSKHTQNGRPWPREG) and 393-431 (TSPQTVAPSSQDSSGQQQQLAVDTPSEHAPAYSFQQSKP). Residues 401–411 (SSQDSSGQQQQ) show a composition bias toward low complexity.

It localises to the cytoplasm. In terms of biological role, binds poly(A) and poly(U) oligoribonucleotides. The chain is RNA-binding motif, single-stranded-interacting protein 3 (Rbms3) from Mus musculus (Mouse).